The chain runs to 182 residues: Lipoprotein signal peptidase (182 aa).

3 consecutive transmembrane segments (helical) span residues 12–32, 68–88, and 91–111; these read VAVF…TKAW, ATWV…VAGV, and ISMK…GNLI. Catalysis depends on residues Asp127 and Asp140. A helical membrane pass occupies residues 135 to 155; it reads VGNVADIYLVVAGVVLVILIL.

Belongs to the peptidase A8 family.

It localises to the cell membrane. The catalysed reaction is Release of signal peptides from bacterial membrane prolipoproteins. Hydrolyzes -Xaa-Yaa-Zaa-|-(S,diacylglyceryl)Cys-, in which Xaa is hydrophobic (preferably Leu), and Yaa (Ala or Ser) and Zaa (Gly or Ala) have small, neutral side chains.. It functions in the pathway protein modification; lipoprotein biosynthesis (signal peptide cleavage). Its function is as follows. This protein specifically catalyzes the removal of signal peptides from prolipoproteins. In Bifidobacterium longum subsp. infantis (strain ATCC 15697 / DSM 20088 / JCM 1222 / NCTC 11817 / S12), this protein is Lipoprotein signal peptidase.